Consider the following 263-residue polypeptide: Large ribosomal subunit protein uL23m (263 aa).

Residues 1–45 (MPRLTVGTKNMLYPLQKTLAVGSCKPEQVPIRSLASVVESSSKIL) constitute a mitochondrion transit peptide.

The protein belongs to the universal ribosomal protein uL23 family. Component of the mitochondrial large ribosomal subunit (mt-LSU). Mature yeast 74S mitochondrial ribosomes consist of a small (37S) and a large (54S) subunit. The 37S small subunit contains a 15S ribosomal RNA (15S mt-rRNA) and 34 different proteins. The 54S large subunit contains a 21S rRNA (21S mt-rRNA) and 46 different proteins. uL23m forms the wall of the exit tunnel. Interacts with the C-terminus of OXA1.

The protein resides in the mitochondrion. Component of the mitochondrial ribosome (mitoribosome), a dedicated translation machinery responsible for the synthesis of mitochondrial genome-encoded proteins, including at least some of the essential transmembrane subunits of the mitochondrial respiratory chain. The mitoribosomes are attached to the mitochondrial inner membrane and translation products are cotranslationally integrated into the membrane. This Saccharomyces cerevisiae (strain ATCC 204508 / S288c) (Baker's yeast) protein is Large ribosomal subunit protein uL23m (MRP20).